The chain runs to 382 residues: MSDKYYRSTYVNVDLNAIVANFQVFQKLHPNKTVMPVVKANGYGLGSIKVARQLMDNGAEFFAVATLDEAIELRMHGIDAKILVLGVIPTEHINKAIQHRVAITVPSKSWLVEAVKEIPESNEKDLWIHVKLDTGMGRLGMKTAEEYKEVIELINGHSHLIFEGVFTHFACADEPGDSMNRQQTMFEEIVGQADKPDYIHSQNSAGALMKDTQFCNAVRVGISLYGYYPSAYVKSNVKVHLKPSAQWISEIVQTKLLHAGESVSYGSVYTADEKTKIGVIPVGYADGYPRMMKGFSVNVNGKQCEVIGKVCMDQTIIKIPDEIQVGDKVIIMDHHSDTPQSAEALAHQQQTINYEVLCRLSRRLPRVYHSSKDLEIRNELLK.

The active-site Proton acceptor; specific for D-alanine is Lys39. The residue at position 39 (Lys39) is an N6-(pyridoxal phosphate)lysine. Arg138 contributes to the substrate binding site. Catalysis depends on Tyr265, which acts as the Proton acceptor; specific for L-alanine. Met312 lines the substrate pocket.

It belongs to the alanine racemase family. It depends on pyridoxal 5'-phosphate as a cofactor.

It carries out the reaction L-alanine = D-alanine. It participates in amino-acid biosynthesis; D-alanine biosynthesis; D-alanine from L-alanine: step 1/1. In terms of biological role, catalyzes the interconversion of L-alanine and D-alanine. May also act on other amino acids. The sequence is that of Alanine racemase (alr) from Staphylococcus saprophyticus subsp. saprophyticus (strain ATCC 15305 / DSM 20229 / NCIMB 8711 / NCTC 7292 / S-41).